A 372-amino-acid chain; its full sequence is Delta-type opioid receptor (372 aa).

At 1-47 (MEPVPSARAELQFSLLANVSDTFPSAFPSASANASGSPGARSASSLA) the chain is on the extracellular side. 2 N-linked (GlcNAc...) asparagine glycosylation sites follow: Asn-18 and Asn-33. The chain crosses the membrane as a helical span at residues 48-75 (LAIAITALYSAVCAVGLLGNVLVMFGIV). Residues 76 to 85 (RYTKLKTATN) are Cytoplasmic-facing. The helical transmembrane segment at 86 to 110 (IYIFNLALADALATSTLPFQSAKYL) threads the bilayer. Topologically, residues 111–122 (METWPFGELLCK) are extracellular. A disulfide bridge links Cys-121 with Cys-198. The helical transmembrane segment at 123 to 144 (AVLSIDYYNMFTSIFTLTMMSV) threads the bilayer. Over 145–163 (DRYIAVCHPVKALDFRTPA) the chain is Cytoplasmic. The helical transmembrane segment at 164–186 (KAKLINICIWVLASGVGVPIMVM) threads the bilayer. Residues 187-206 (AVTQPRDGAVVCTLQFPSPS) lie on the Extracellular side of the membrane. A helical transmembrane segment spans residues 207–238 (WYWDTVTKICVFLFAFVVPILIITVCYGLMLL). The Cytoplasmic portion of the chain corresponds to 239–261 (RLRSVRLLSGSKEKDRSLRRITR). Residues 262 to 284 (MVLVVVGAFVVCWAPIHIFVIVW) traverse the membrane as a helical segment. At 285–299 (TLVDINRRDPLVVAA) the chain is on the extracellular side. A helical membrane pass occupies residues 300 to 321 (LHLCIALGYANSSLNPVLYAFL). Over 322–372 (DENFKRCFRQLCRAPCGGQEPGSLRRPRQATARERVTACTPSDGPGGGAAA) the chain is Cytoplasmic. Cys-333 carries the S-palmitoyl cysteine lipid modification. The interval 340–372 (QEPGSLRRPRQATARERVTACTPSDGPGGGAAA) is disordered.

Belongs to the G-protein coupled receptor 1 family. As to quaternary structure, may form homooligomers. Forms a heterodimer with OPRM1. Interacts with GPRASP1. Interacts with RTP4; the interaction promotes cell surface localization of the OPRD1-OPRM1 heterodimer. Post-translationally, ubiquitinated. A basal ubiquitination seems not to be related to degradation. Ubiquitination is increased upon formation of OPRM1:OPRD1 oligomers leading to proteasomal degradation; the ubiquitination is diminished by RTP4. In terms of tissue distribution, detected in brain, brain stem and brain cortex.

It is found in the cell membrane. Functionally, G-protein coupled receptor that functions as a receptor for endogenous enkephalins and for a subset of other opioids. Ligand binding causes a conformation change that triggers signaling via guanine nucleotide-binding proteins (G proteins) and modulates the activity of down-stream effectors, such as adenylate cyclase. Signaling leads to the inhibition of adenylate cyclase activity. Inhibits neurotransmitter release by reducing calcium ion currents and increasing potassium ion conductance. Plays a role in the perception of pain and in opiate-mediated analgesia. Plays a role in developing analgesic tolerance to morphine. This Rattus norvegicus (Rat) protein is Delta-type opioid receptor (Oprd1).